The primary structure comprises 236 residues: Phospholipid hydroperoxide glutathione peroxidase 1, chloroplastic (236 aa).

The segment covering 1–16 has biased composition (low complexity); it reads MVSMTTSSSSYGTFST. The disordered stretch occupies residues 1–24; it reads MVSMTTSSSSYGTFSTVVNSSRPN. A chloroplast-targeting transit peptide spans 1–64; it reads MVSMTTSSSS…PINPGFLFKS (64 aa). The active site involves Cys111.

The protein belongs to the glutathione peroxidase family. As to expression, expressed in leaves, stems, flowers, green siliques and seeds.

Its subcellular location is the plastid. The protein localises to the chloroplast. The enzyme catalyses a hydroperoxy polyunsaturated fatty acid + 2 glutathione = a hydroxy polyunsaturated fatty acid + glutathione disulfide + H2O. Protects cells and enzymes from oxidative damage, by catalyzing the reduction of hydrogen peroxide, lipid peroxides and organic hydroperoxide, by glutathione. In Arabidopsis thaliana (Mouse-ear cress), this protein is Phospholipid hydroperoxide glutathione peroxidase 1, chloroplastic (GPX1).